A 298-amino-acid chain; its full sequence is Ankyrin repeat domain-containing protein 29 (298 aa).

ANK repeat units follow at residues Pro8–Cys38, Tyr42–Leu71, Thr75–Phe104, Asp108–Asp137, Asp141–Gln170, Asp174–Ala203, Asp207–Ile236, and Asn239–Leu268.

The polypeptide is Ankyrin repeat domain-containing protein 29 (ankrd29) (Danio rerio (Zebrafish)).